The sequence spans 328 residues: Zinc transporter ZIP13 (328 aa).

The Lumenal portion of the chain corresponds to 1–7 (MPGCPCP). The helical transmembrane segment at 8–28 (GCGMAGPRLLFLTALALELLG) threads the bilayer. Residues 29–68 (RAGGSQPALRSRGTATACRLDNKESESWGALLSGERLDTW) lie on the Cytoplasmic side of the membrane. A helical membrane pass occupies residues 69 to 89 (ICSLLGSLMVGLSGVFPLLVI). Residues 90-108 (PLEMGTMLRSEAGAWHLKQ) are Lumenal-facing. A helical transmembrane segment spans residues 109-129 (LLSFALGGLLGNVFLHLLPEA). Residues 130–149 (WAYTCSASPGGEGQSLQQQQ) are Cytoplasmic-facing. A helical membrane pass occupies residues 150 to 170 (QLGLWVIAGILTFLALEKMFL). Topologically, residues 171–199 (DSKEEGTSQVSGYLNLLANTIDNFTHGLA) are lumenal. Residues 200 to 220 (VAASFLVSKKIGLLTTMAILL) form a helical membrane-spanning segment. The short motif at 221 to 226 (HEIPHE) is the XEXPHE-motif element. The Cytoplasmic segment spans residues 221-242 (HEIPHEVGDFAILLRAGFDRWS). Residues 243 to 263 (AAKLQLSTALGGLLGAGFAIC) traverse the membrane as a helical segment. The Lumenal portion of the chain corresponds to 264–273 (TQSPKGVEET). The chain crosses the membrane as a helical span at residues 274-294 (AAWVLPFTSGGFLYIALVNVL). Residues 295–306 (PDLLEEEDPWRS) lie on the Cytoplasmic side of the membrane. The chain crosses the membrane as a helical span at residues 307–327 (LQQLLLLCAGIVVMVLFSLFV). Position 328 (aspartate 328) is a topological domain, lumenal.

The protein belongs to the ZIP transporter (TC 2.A.5) family. Homodimer.

The protein resides in the golgi apparatus membrane. The protein localises to the cytoplasmic vesicle membrane. It is found in the endoplasmic reticulum membrane. It carries out the reaction Zn(2+)(in) = Zn(2+)(out). Functionally, functions as a zinc transporter transporting Zn(2+) from the Golgi apparatus to the cytosol and thus influences the zinc level at least in areas of the cytosol. May regulate beige adipocyte differentiation. This is Zinc transporter ZIP13 from Pongo abelii (Sumatran orangutan).